A 402-amino-acid polypeptide reads, in one-letter code: MNVLVINSGSSSIKYQLIDMEREVPLCSGLVERIGEPMGKLTHKIRPDAEGEEKLTFEQPFTNHVEGMKRVVELITDADKGVIKDKSEIGAIGHRVLLGGEEIKQSVRIDDWAKGVIRDYIPLGPLHNPANLAGIEVAEELFPGLPNVGVFDTEFHQSMPAKAYLYPLPIELYEELKIRRYGFHGTSHRYITKRTAQYLGKPLDELNIITCHLGNGCSMAAVKNGKCVDTTMGITPLEGLMMGTRCGDIDPAIVPFLMEKKNLSPAEADTLMNKQSGLKGMCGMNDMRDLHAARENGNERAQLAFEMFTYRIKKYIGAYYAVLGRVDAVVFTAGIGENDDFVRAEVCAGLDSLGIAVDPARNAVRNGQPRHISPDGSRVAVLVVPTNEELEIAQATLDVLKG.

Asparagine 7 lines the Mg(2+) pocket. Lysine 14 provides a ligand contact to ATP. Residue arginine 95 coordinates substrate. Aspartate 152 functions as the Proton donor/acceptor in the catalytic mechanism. Residues 212 to 216 (HLGNG), 286 to 288 (DMR), and 334 to 338 (GIGEN) each bind ATP. Glutamate 388 contacts Mg(2+).

It belongs to the acetokinase family. Homodimer. It depends on Mg(2+) as a cofactor. Requires Mn(2+) as cofactor.

Its subcellular location is the cytoplasm. It catalyses the reaction acetate + ATP = acetyl phosphate + ADP. The protein operates within metabolic intermediate biosynthesis; acetyl-CoA biosynthesis; acetyl-CoA from acetate: step 1/2. Its function is as follows. Catalyzes the formation of acetyl phosphate from acetate and ATP. Can also catalyze the reverse reaction. In Nitratidesulfovibrio vulgaris (strain ATCC 29579 / DSM 644 / CCUG 34227 / NCIMB 8303 / VKM B-1760 / Hildenborough) (Desulfovibrio vulgaris), this protein is Acetate kinase.